We begin with the raw amino-acid sequence, 492 residues long: Ammonium transporter MEP1 (492 aa).

Topologically, residues 1 to 18 (MESRTTGPLTTETYDGPT) are extracellular. Residues 19 to 39 (VAFMILGAALVFFMVPGLGFL) form a helical membrane-spanning segment. Residues 40–49 (YSGLARRKSA) are Cytoplasmic-facing. Residues 50–70 (LALIWVVLMATLVGILQWYFW) form a helical membrane-spanning segment. Residues 71–109 (GYSLAFSKSAPNNKFIGNLDSFGFRNVYGKKFDEDAYPE) lie on the Extracellular side of the membrane. Residues 110 to 130 (LAYATFQMMFSCVNLSIIAGA) form a helical membrane-spanning segment. The Cytoplasmic portion of the chain corresponds to 131–140 (TAERGRLLPH). Residues 141 to 161 (MVFLFILATIGYCPVTYWIWS) traverse the membrane as a helical segment. The Extracellular segment spans residues 162 to 174 (PGGWAYQWGVLDW). A helical membrane pass occupies residues 175–195 (AGGGNIEILSAVSGFVYSWFL). The Cytoplasmic portion of the chain corresponds to 196–210 (GKRNEKLLINFRPHN). A helical membrane pass occupies residues 211–231 (VSLVTLGTSILWFGWLLFNSA). The Extracellular portion of the chain corresponds to 232–240 (SSLSPNLRS). The helical transmembrane segment at 241-261 (VYAFMNTCLSAITGGMTWCLL) threads the bilayer. The Cytoplasmic segment spans residues 262 to 268 (DYRSEKK). The helical transmembrane segment at 269-289 (WSTVGLCSGIISGLVAATPSS) threads the bilayer. Residue Gly290 is a topological domain, extracellular. Residues 291-311 (CITLYGSLIQGIVAGVVCNFA) traverse the membrane as a helical segment. The Cytoplasmic segment spans residues 312-331 (TKLKYYAKVDDAMDILAEHG). Residues 332-352 (VAGVIGLIFNALFGADWVIGM) form a helical membrane-spanning segment. Residues 353–373 (DGTTEHEGGWVTHNYKQMYKQ) lie on the Extracellular side of the membrane. The chain crosses the membrane as a helical span at residues 374–394 (IAYIAASIGYTAAVTAIICFV). The Cytoplasmic portion of the chain corresponds to 395-492 (LGYIPGMRLR…PIHQEDPANR (98 aa)). 2 positions are modified to phosphoserine: Ser442 and Ser445. Residues 455–492 (HLAAERSSSGTNSSSDGNGEMIQSEKILPIHQEDPANR) form a disordered region. Residues 461 to 473 (SSSGTNSSSDGNG) are compositionally biased toward low complexity.

Belongs to the ammonia transporter channel (TC 1.A.11.2) family.

It localises to the membrane. In terms of biological role, transporter for ammonium (both charged and uncharged NH3 and NH4) to use as a nitrogen source. Can also transport methylamine. The affinity of MEP1 is about twenty times lower than that of MEP2. MEP3 has the lowest affinity. The protein is Ammonium transporter MEP1 (MEP1) of Saccharomyces cerevisiae (strain ATCC 204508 / S288c) (Baker's yeast).